Reading from the N-terminus, the 243-residue chain is 1-(5-phosphoribosyl)-5-[(5-phosphoribosylamino)methylideneamino] imidazole-4-carboxamide isomerase (243 aa).

Asp8 functions as the Proton acceptor in the catalytic mechanism. Residue Asp130 is the Proton donor of the active site.

It belongs to the HisA/HisF family.

Its subcellular location is the cytoplasm. The enzyme catalyses 1-(5-phospho-beta-D-ribosyl)-5-[(5-phospho-beta-D-ribosylamino)methylideneamino]imidazole-4-carboxamide = 5-[(5-phospho-1-deoxy-D-ribulos-1-ylimino)methylamino]-1-(5-phospho-beta-D-ribosyl)imidazole-4-carboxamide. It functions in the pathway amino-acid biosynthesis; L-histidine biosynthesis; L-histidine from 5-phospho-alpha-D-ribose 1-diphosphate: step 4/9. This chain is 1-(5-phosphoribosyl)-5-[(5-phosphoribosylamino)methylideneamino] imidazole-4-carboxamide isomerase, found in Methylococcus capsulatus (strain ATCC 33009 / NCIMB 11132 / Bath).